Consider the following 900-residue polypeptide: MTDVTVKSLAAEIQTPVDRLVQQFADAGMTKSASDSVTQHEKETLLAHLNRDRGNAPSKLTLQRKTRSTLNVPSTGGKSKSVQIEVRKTRTYVKRDPIEAQQAEEEEQARREAEEQAQRAAEEQVKREADLRETAEKAKRAADEQAKREAAEKAKRDVAEKEKVTNQQNENMTKPAQSEKAKREAEAAELKRKAEETARLKVEEEARRIAEEARRMAEENAGRWEAESATKPEESADYHVTTSHHAREAEDENDRQVEGERRTRTRAAKVTKQKKGNRQSESKADREEARAVTRGGKGKRKPSSLQQSFNKPVQAVNRDVVIGETVTVAELANKMAVKGSQVIKTMMRLGAMATINQVIDQETAQLVAEEMGHKVILRRENELEEAVMSDRDMGVAAEFRAPVVTIMGHVDHGKTSLLDYIRSTKVAAGEAGGITQHIGAYHVETDNGMITFLDTPGHAAFTAMRARGAQATDIVVLVVAADDGVMPQTIEAIQHAKAAQVPVVVAVNKIDKPDADPDRVKTELSQYGIMPEEWGGESQFVHVSAKAGTGIDELLNAILLQAEVLELKAVRSGMANGVVIESFLDKGRGPVATVLVREGTLNKGDIVLCGFEYGRIRAMRDELGREITSAGPSIPVEILGMSGVPAAGDEATVVRDEKKAREVALYRQGKFREVKLARQQKSKLENMFANMTEGEVSELNIVLKSDVQGSCEAISDSLQKLSTDEVKVKIVGSGVGGITETDATLAAASNAIILGFNVRADASARRVVEAESLDLRYYSVIYDLIDEVKQAMSGMLAPEYKQEIIGLAEVRDVFKSPKFGAVAGCMVTEGIVKRHNKIRVLRDNVVIYEGELESLRRFKDDVNEVRNGMECGIGVKNYNDVRPGDMIEVFETIEIKRTIA.

Positions 48 to 310 are disordered; sequence HLNRDRGNAP…KPSSLQQSFN (263 aa). Residues 68–82 show a composition bias toward polar residues; that stretch reads STLNVPSTGGKSKSV. Composition is skewed to basic and acidic residues over residues 85-98 and 108-164; these read EVRK…RDPI and QARR…KEKV. Positions 165-176 are enriched in polar residues; sequence TNQQNENMTKPA. Positions 177–237 are enriched in basic and acidic residues; the sequence is QSEKAKREAE…SATKPEESAD (61 aa). Positions 263–277 are enriched in basic residues; it reads TRTRAAKVTKQKKGN. Basic and acidic residues predominate over residues 278–291; it reads RQSESKADREEARA. The tr-type G domain occupies 399-568; sequence FRAPVVTIMG…LLQAEVLELK (170 aa). Residues 408–415 form a G1 region; that stretch reads GHVDHGKT. 408-415 contacts GTP; that stretch reads GHVDHGKT. A G2 region spans residues 433–437; it reads GITQH. The segment at 454–457 is G3; it reads DTPG. GTP is bound by residues 454 to 458 and 508 to 511; these read DTPGH and NKID. Residues 508-511 are G4; the sequence is NKID. The segment at 544-546 is G5; sequence SAK.

This sequence belongs to the TRAFAC class translation factor GTPase superfamily. Classic translation factor GTPase family. IF-2 subfamily.

It is found in the cytoplasm. Its function is as follows. One of the essential components for the initiation of protein synthesis. Protects formylmethionyl-tRNA from spontaneous hydrolysis and promotes its binding to the 30S ribosomal subunits. Also involved in the hydrolysis of GTP during the formation of the 70S ribosomal complex. This is Translation initiation factor IF-2 from Pectobacterium atrosepticum (strain SCRI 1043 / ATCC BAA-672) (Erwinia carotovora subsp. atroseptica).